The primary structure comprises 355 residues: Small ribosomal subunit protein uS2 (355 aa).

It belongs to the universal ribosomal protein uS2 family.

In Methylobacterium radiotolerans (strain ATCC 27329 / DSM 1819 / JCM 2831 / NBRC 15690 / NCIMB 10815 / 0-1), this protein is Small ribosomal subunit protein uS2.